The sequence spans 281 residues: MLRVAVPNKGSLSETATSILKEAGYATRGDSKSLTIADEDNGVEFYFLRPKDIAIYIASGHLDIGITGRDLAADTREEVDELLALGFGASTFRYAAPKDENWTVEQLAGKRIATSYPNLVRKDLANRGLEAQVIRLDGAVEISIRLGVADVIADVVSTGRTLRQQGLKPFGDPLCVSEAVIVGRKGAEVTAEQSVLIKRIQGILHAHNYVMLDYNVARENLDKVAAITPGLSAPTVSPLANDSWVAVRAMVPKTQANSLMDELSALGAEAILATDIRIARI.

It belongs to the ATP phosphoribosyltransferase family. Long subfamily. Mg(2+) is required as a cofactor.

It localises to the cytoplasm. The catalysed reaction is 1-(5-phospho-beta-D-ribosyl)-ATP + diphosphate = 5-phospho-alpha-D-ribose 1-diphosphate + ATP. It functions in the pathway amino-acid biosynthesis; L-histidine biosynthesis; L-histidine from 5-phospho-alpha-D-ribose 1-diphosphate: step 1/9. Its activity is regulated as follows. Feedback inhibited by histidine. Its function is as follows. Catalyzes the condensation of ATP and 5-phosphoribose 1-diphosphate to form N'-(5'-phosphoribosyl)-ATP (PR-ATP). Has a crucial role in the pathway because the rate of histidine biosynthesis seems to be controlled primarily by regulation of HisG enzymatic activity. The polypeptide is ATP phosphoribosyltransferase (Corynebacterium jeikeium (strain K411)).